Reading from the N-terminus, the 153-residue chain is uncharacterized protein (153 aa).

A disordered region spans residues 19–46 (EKSTRLEEDAMESEPLAGTKTRGRGRRR).

This is an uncharacterized protein from Homo sapiens (Human).